The chain runs to 118 residues: NADH-quinone oxidoreductase subunit A (118 aa).

The next 3 membrane-spanning stretches (helical) occupy residues 5-25 (FAAV…MMLM), 61-81 (FLYA…FPWA), and 90-110 (FAFI…WYAW).

It belongs to the complex I subunit 3 family. As to quaternary structure, NDH-1 is composed of 14 different subunits. Subunits NuoA, H, J, K, L, M, N constitute the membrane sector of the complex.

The protein resides in the cell membrane. It carries out the reaction a quinone + NADH + 5 H(+)(in) = a quinol + NAD(+) + 4 H(+)(out). Functionally, NDH-1 shuttles electrons from NADH, via FMN and iron-sulfur (Fe-S) centers, to quinones in the respiratory chain. The immediate electron acceptor for the enzyme in this species is believed to be a menaquinone. Couples the redox reaction to proton translocation (for every two electrons transferred, four hydrogen ions are translocated across the cytoplasmic membrane), and thus conserves the redox energy in a proton gradient. This is NADH-quinone oxidoreductase subunit A from Desulfitobacterium hafniense (strain Y51).